Consider the following 442-residue polypeptide: tRNA modification GTPase MnmE (442 aa).

(6S)-5-formyl-5,6,7,8-tetrahydrofolate-binding residues include arginine 22, glutamate 79, and lysine 119. A TrmE-type G domain is found at 216 to 366 (GIKTCLVGAP…LLEKIKSIFA (151 aa)). Asparagine 226 serves as a coordination point for K(+). Residues 226 to 231 (NSGKSS), 245 to 251 (SEIPGTT), and 270 to 273 (DTAG) contribute to the GTP site. Serine 230 contacts Mg(2+). K(+) contacts are provided by serine 245, isoleucine 247, and threonine 250. Threonine 251 is a Mg(2+) binding site. Residue lysine 442 coordinates (6S)-5-formyl-5,6,7,8-tetrahydrofolate.

It belongs to the TRAFAC class TrmE-Era-EngA-EngB-Septin-like GTPase superfamily. TrmE GTPase family. As to quaternary structure, homodimer. Heterotetramer of two MnmE and two MnmG subunits. K(+) serves as cofactor.

It is found in the cytoplasm. In terms of biological role, exhibits a very high intrinsic GTPase hydrolysis rate. Involved in the addition of a carboxymethylaminomethyl (cmnm) group at the wobble position (U34) of certain tRNAs, forming tRNA-cmnm(5)s(2)U34. The sequence is that of tRNA modification GTPase MnmE from Mesomycoplasma hyopneumoniae (strain J / ATCC 25934 / NCTC 10110) (Mycoplasma hyopneumoniae).